The following is a 203-amino-acid chain: Probable proteasome subunit beta type-4 (203 aa).

The protein belongs to the peptidase T1B family. As to quaternary structure, the 26S proteasome consists of a 20S proteasome core and two 19S regulatory subunits. The 20S proteasome core is composed of 28 subunits that are arranged in four stacked rings, resulting in a barrel-shaped structure. The two end rings are each formed by seven alpha subunits, and the two central rings are each formed by seven beta subunits. The catalytic chamber with the active sites is on the inside of the barrel.

Its subcellular location is the cytoplasm. It localises to the nucleus. Functionally, non-catalytic component of the proteasome, a multicatalytic proteinase complex which is characterized by its ability to cleave peptides with Arg, Phe, Tyr, Leu, and Glu adjacent to the leaving group at neutral or slightly basic pH. The proteasome has an ATP-dependent proteolytic activity. The protein is Probable proteasome subunit beta type-4 (pcb-4) of Neurospora crassa (strain ATCC 24698 / 74-OR23-1A / CBS 708.71 / DSM 1257 / FGSC 987).